A 340-amino-acid polypeptide reads, in one-letter code: Phenylalanine--tRNA ligase alpha subunit (340 aa).

Glutamate 255 is a binding site for Mg(2+).

The protein belongs to the class-II aminoacyl-tRNA synthetase family. Phe-tRNA synthetase alpha subunit type 1 subfamily. Tetramer of two alpha and two beta subunits. Requires Mg(2+) as cofactor.

The protein resides in the cytoplasm. It carries out the reaction tRNA(Phe) + L-phenylalanine + ATP = L-phenylalanyl-tRNA(Phe) + AMP + diphosphate + H(+). The sequence is that of Phenylalanine--tRNA ligase alpha subunit from Desulfitobacterium hafniense (strain DSM 10664 / DCB-2).